A 394-amino-acid polypeptide reads, in one-letter code: 1-deoxy-D-xylulose 5-phosphate reductoisomerase (394 aa).

NADPH contacts are provided by Thr-14, Gly-15, Ser-16, Ile-17, Gly-40, Asn-43, and Asn-130. Residue Lys-131 coordinates 1-deoxy-D-xylulose 5-phosphate. NADPH is bound at residue Glu-132. Asp-154 is a Mn(2+) binding site. 1-deoxy-D-xylulose 5-phosphate is bound by residues Ser-155, Glu-156, Ser-180, and His-203. Glu-156 contacts Mn(2+). Gly-209 contributes to the NADPH binding site. Residues Ser-216, Asn-221, Lys-222, and Glu-225 each contribute to the 1-deoxy-D-xylulose 5-phosphate site. Position 225 (Glu-225) interacts with Mn(2+).

Belongs to the DXR family. It depends on Mg(2+) as a cofactor. Requires Mn(2+) as cofactor.

It carries out the reaction 2-C-methyl-D-erythritol 4-phosphate + NADP(+) = 1-deoxy-D-xylulose 5-phosphate + NADPH + H(+). The protein operates within isoprenoid biosynthesis; isopentenyl diphosphate biosynthesis via DXP pathway; isopentenyl diphosphate from 1-deoxy-D-xylulose 5-phosphate: step 1/6. Its function is as follows. Catalyzes the NADPH-dependent rearrangement and reduction of 1-deoxy-D-xylulose-5-phosphate (DXP) to 2-C-methyl-D-erythritol 4-phosphate (MEP). The polypeptide is 1-deoxy-D-xylulose 5-phosphate reductoisomerase (Corynebacterium efficiens (strain DSM 44549 / YS-314 / AJ 12310 / JCM 11189 / NBRC 100395)).